Reading from the N-terminus, the 133-residue chain is Profilin (133 aa).

This sequence belongs to the profilin family.

Its function is as follows. More likely to influence phosphoinositide metabolism than actin assembly. The sequence is that of Profilin from Vaccinia virus (strain Tian Tan) (VACV).